Here is a 179-residue protein sequence, read N- to C-terminus: Large ribosomal subunit protein uL5c (179 aa).

Belongs to the universal ribosomal protein uL5 family. In terms of assembly, part of the 50S ribosomal subunit; contacts the 5S rRNA.

The protein resides in the plastid. Binds 5S rRNA, forms part of the central protuberance of the 50S subunit. In Euglena longa (Euglenophycean alga), this protein is Large ribosomal subunit protein uL5c (rpl5).